The chain runs to 314 residues: MEWSEVEVHTTNEAVEPVANVLTEFGAAGVSIEDVADFLREREDKFGEIYALKREDYPEDGVIIKAYFLKTAEFVEQIPEIEKTLKNLTTFDIPLGKFQFVVNDVDDEEWATAWKKYYHPVQITDRITIVPSWESYTPSANEIIIELDPGMAFGTGTHPTTQLCIRALSDYLQPNDEIIDVGTGSGVLSIASAKLGAKSVLATDLDEIATRAAEENIILNKTEHIITVKQNNLLQDINKTNVDIVVANILAEVILLFPEDVYRALKPGGIFIASGIIEDKAKVVEEALKNAGLVIEKIEQQGDWVAIISKRGVE.

S-adenosyl-L-methionine-binding residues include threonine 161, glycine 182, aspartate 204, and asparagine 248.

Belongs to the methyltransferase superfamily. PrmA family.

It localises to the cytoplasm. It catalyses the reaction L-lysyl-[protein] + 3 S-adenosyl-L-methionine = N(6),N(6),N(6)-trimethyl-L-lysyl-[protein] + 3 S-adenosyl-L-homocysteine + 3 H(+). Its function is as follows. Methylates ribosomal protein L11. The sequence is that of Ribosomal protein L11 methyltransferase from Listeria welshimeri serovar 6b (strain ATCC 35897 / DSM 20650 / CCUG 15529 / CIP 8149 / NCTC 11857 / SLCC 5334 / V8).